Reading from the N-terminus, the 265-residue chain is Eukaryotic translation initiation factor 3 subunit J (265 aa).

Composition is skewed to acidic residues over residues 1-12 (MAPERWDDEEDS) and 26-44 (DEEEDEVLDSWDAAEDSEV). Disordered regions lie at residues 1-113 (MAPE…DADL) and 212-265 (TMSN…DDFM). Composition is skewed to basic and acidic residues over residues 45-65 (EREKAAKAAEAKAKADAEAAA) and 73-86 (RIQEHKEERKKKAE). Residues 61 to 95 (AEAAAKKKSKSQRIQEHKEERKKKAEEEDSDSEEE) are a coiled coil. Positions 87–97 (EEDSDSEEEDD) are enriched in acidic residues. A compositionally biased stretch (basic and acidic residues) spans 216-228 (EKMREERAADKGS). Positions 251–265 (DYDNGDDGLGDDDFM) are enriched in acidic residues.

It belongs to the eIF-3 subunit J family. As to quaternary structure, component of the eukaryotic translation initiation factor 3 (eIF-3) complex.

Its subcellular location is the cytoplasm. In terms of biological role, component of the eukaryotic translation initiation factor 3 (eIF-3) complex, which is involved in protein synthesis of a specialized repertoire of mRNAs and, together with other initiation factors, stimulates binding of mRNA and methionyl-tRNAi to the 40S ribosome. The eIF-3 complex specifically targets and initiates translation of a subset of mRNAs involved in cell proliferation. The chain is Eukaryotic translation initiation factor 3 subunit J (hcr1) from Aspergillus oryzae (strain ATCC 42149 / RIB 40) (Yellow koji mold).